We begin with the raw amino-acid sequence, 442 residues long: Protein PRRC1-A (442 aa).

The segment at 1-27 (MMEESGIETTPPSTPPPSTIGTSVPAA) is disordered.

The protein belongs to the PRRC1 family.

It is found in the golgi apparatus. The sequence is that of Protein PRRC1-A (prrc1-a) from Xenopus laevis (African clawed frog).